The sequence spans 466 residues: Cysteine--tRNA ligase (466 aa).

Position 33 (C33) interacts with Zn(2+). A 'HIGH' region motif is present at residues 35-45 (PTVYDYAHIGN). Positions 221, 246, and 250 each coordinate Zn(2+). The short motif at 279–283 (KMSKS) is the 'KMSKS' region element. An ATP-binding site is contributed by K282.

This sequence belongs to the class-I aminoacyl-tRNA synthetase family. In terms of assembly, monomer. Requires Zn(2+) as cofactor.

It is found in the cytoplasm. It catalyses the reaction tRNA(Cys) + L-cysteine + ATP = L-cysteinyl-tRNA(Cys) + AMP + diphosphate. This is Cysteine--tRNA ligase from Rhizobium meliloti (strain 1021) (Ensifer meliloti).